We begin with the raw amino-acid sequence, 231 residues long: Two-component response regulator ARR3 (231 aa).

The Response regulatory domain occupies 34–161; that stretch reads HVLAVDDSLV…DVKRLRSYLT (128 aa). The residue at position 94 (Asp-94) is a 4-aspartylphosphate. The disordered stretch occupies residues 170–231; sequence GNKRKLTTPP…DSPMRSPGLA (62 aa). The span at 185–199 shows a compositional bias: low complexity; the sequence is SATSSMESSDSTVES. Residues 210–221 are compositionally biased toward polar residues; that stretch reads LTMSPESATSLV.

The protein belongs to the ARR family. Type-A subfamily. In terms of processing, two-component system major event consists of a His-to-Asp phosphorelay between a sensor histidine kinase (HK) and a response regulator (RR). In plants, the His-to-Asp phosphorelay involves an additional intermediate named Histidine-containing phosphotransfer protein (HPt). This multistep phosphorelay consists of a His-Asp-His-Asp sequential transfer of a phosphate group between first a His and an Asp of the HK protein, followed by the transfer to a conserved His of the HPt protein and finally the transfer to an Asp in the receiver domain of the RR protein. In terms of tissue distribution, predominantly expressed in roots.

Its subcellular location is the nucleus. Its function is as follows. Functions as a response regulator involved in His-to-Asp phosphorelay signal transduction system. Phosphorylation of the Asp residue in the receiver domain activates the ability of the protein to promote the transcription of target genes. Type-A response regulators seem to act as negative regulators of the cytokinin signaling. This Arabidopsis thaliana (Mouse-ear cress) protein is Two-component response regulator ARR3 (ARR3).